The following is a 195-amino-acid chain: Probable GTP-binding protein EngB (195 aa).

Residues 22 to 195 (GRPEVALAGR…WAALLPFVAS (174 aa)) enclose the EngB-type G domain. GTP-binding positions include 30-37 (GRSNVGKS), 57-61 (GKTQT), 75-78 (DVPG), 142-145 (TKAD), and 174-176 (FSA). 2 residues coordinate Mg(2+): Ser37 and Thr59.

It belongs to the TRAFAC class TrmE-Era-EngA-EngB-Septin-like GTPase superfamily. EngB GTPase family. Mg(2+) is required as a cofactor.

Functionally, necessary for normal cell division and for the maintenance of normal septation. This is Probable GTP-binding protein EngB from Geobacillus kaustophilus (strain HTA426).